The following is a 203-amino-acid chain: Endo-type membrane-bound lytic murein transglycosylase A (203 aa).

An N-terminal signal peptide occupies residues 1–15 (MKLRWFAFLIVLLAG). Residue C16 is the site of N-palmitoyl cysteine attachment. C16 is lipidated: S-diacylglycerol cysteine.

Belongs to the transglycosylase Slt family.

Its subcellular location is the cell outer membrane. The enzyme catalyses Endolytic cleavage of the (1-&gt;4)-beta-glycosidic linkage between N-acetylmuramic acid (MurNAc) and N-acetylglucosamine (GlcNAc) residues in peptidoglycan with concomitant formation of a 1,6-anhydrobond in the MurNAc residue.. Functionally, murein-degrading enzyme. May play a role in recycling of muropeptides during cell elongation and/or cell division. Preferentially cleaves at a distance of more than two disaccharide units from the ends of the glycan chain. This chain is Endo-type membrane-bound lytic murein transglycosylase A, found in Escherichia coli (strain K12 / MC4100 / BW2952).